The primary structure comprises 214 residues: Adenylate kinase (214 aa).

10 to 15 is a binding site for ATP; the sequence is GAGKGT. The segment at 30-59 is NMP; it reads STGDMLRAAIKAGTELGNAAKRVMDEGKLV. Residues Thr-31, Arg-36, 57–59, 85–88, and Gln-92 contribute to the AMP site; these read KLV and GFPR. Residues 122–159 form an LID region; it reads GRRVHPASGRVYHLQYNPPQNDGKDDETGEDLVIRADD. Residues Arg-123 and 132–133 each bind ATP; that span reads VY. The AMP site is built by Arg-156 and Arg-167. ATP is bound at residue Lys-200.

It belongs to the adenylate kinase family. In terms of assembly, monomer.

The protein resides in the cytoplasm. It carries out the reaction AMP + ATP = 2 ADP. Its pathway is purine metabolism; AMP biosynthesis via salvage pathway; AMP from ADP: step 1/1. In terms of biological role, catalyzes the reversible transfer of the terminal phosphate group between ATP and AMP. Plays an important role in cellular energy homeostasis and in adenine nucleotide metabolism. The chain is Adenylate kinase from Pseudoalteromonas atlantica (strain T6c / ATCC BAA-1087).